A 198-amino-acid chain; its full sequence is Small ribosomal subunit protein uS5 (198 aa).

In terms of domain architecture, S5 DRBM spans 46 to 109 (LEDDVLEISM…NNAKLNIFKV (64 aa)).

This sequence belongs to the universal ribosomal protein uS5 family. Part of the 30S ribosomal subunit. Contacts protein S4.

With S4 and S12 plays an important role in translational accuracy. This is Small ribosomal subunit protein uS5 from Archaeoglobus fulgidus (strain ATCC 49558 / DSM 4304 / JCM 9628 / NBRC 100126 / VC-16).